A 120-amino-acid polypeptide reads, in one-letter code: NAD(P)H-quinone oxidoreductase subunit 3, chloroplastic (120 aa).

The next 3 membrane-spanning stretches (helical) occupy residues I9 to G29, M64 to M84, and V88 to L108.

This sequence belongs to the complex I subunit 3 family. As to quaternary structure, NDH is composed of at least 16 different subunits, 5 of which are encoded in the nucleus.

Its subcellular location is the plastid. It is found in the chloroplast thylakoid membrane. It carries out the reaction a plastoquinone + NADH + (n+1) H(+)(in) = a plastoquinol + NAD(+) + n H(+)(out). The enzyme catalyses a plastoquinone + NADPH + (n+1) H(+)(in) = a plastoquinol + NADP(+) + n H(+)(out). NDH shuttles electrons from NAD(P)H:plastoquinone, via FMN and iron-sulfur (Fe-S) centers, to quinones in the photosynthetic chain and possibly in a chloroplast respiratory chain. The immediate electron acceptor for the enzyme in this species is believed to be plastoquinone. Couples the redox reaction to proton translocation, and thus conserves the redox energy in a proton gradient. In Ranunculus macranthus (Large buttercup), this protein is NAD(P)H-quinone oxidoreductase subunit 3, chloroplastic.